We begin with the raw amino-acid sequence, 436 residues long: CaM kinase-like vesicle-associated protein (436 aa).

The 263-residue stretch at 24 to 286 (YDLGQIVKSE…AQEAINHEWI (263 aa)) folds into the Protein kinase domain. The disordered stretch occupies residues 328–436 (APENQTAAAT…ALDTVEEQSG (109 aa)). Positions 333-409 (TAAATAPAAE…QPPAEPVVHV (77 aa)) are enriched in low complexity.

Belongs to the protein kinase superfamily. CAMK Ser/Thr protein kinase family. Interacts with calmodulin, in the presence of calcium. Ca(2+) is required as a cofactor.

The protein localises to the cytoplasmic vesicle membrane. In terms of biological role, does not appear to have detectable kinase activity. The protein is CaM kinase-like vesicle-associated protein (camkv) of Danio rerio (Zebrafish).